Consider the following 385-residue polypeptide: Podocin (385 aa).

Over residues 1–27 (MDSRARSSSREAHGRSSRSSSRDDKKA) the composition is skewed to basic and acidic residues. A disordered region spans residues 1-64 (MDSRARSSSR…GEPRAPAATA (64 aa)). Over 1 to 104 (MDSRARSSSR…IKPSGLGACE (104 aa)) the chain is Cytoplasmic. Cys-103 carries the S-palmitoyl cysteine lipid modification. Residues 105–125 (WLLVLASLIFIIMTFPFSIWF) traverse the membrane as a helical segment. The Extracellular segment spans residues 126–385 (CIKVVQEYER…NPKKKDSPML (260 aa)). Residues 357-370 (NRAQGSINYPSSSK) show a composition bias toward polar residues. Residues 357–385 (NRAQGSINYPSSSKPVEPLNPKKKDSPML) are disordered. Basic and acidic residues predominate over residues 376–385 (NPKKKDSPML).

It belongs to the band 7/mec-2 family. In terms of assembly, interacts with nephrin/NPHS1, KIRRL1 and CD2AP. Interacts with DDN.

The protein resides in the membrane. In terms of biological role, plays a role in the regulation of glomerular permeability, acting probably as a linker between the plasma membrane and the cytoskeleton. In Mus musculus (Mouse), this protein is Podocin (Nphs2).